The chain runs to 501 residues: Dipeptide and tripeptide permease A (501 aa).

The Cytoplasmic segment spans residues 1–21 (MSTANNKPAESVSLNAFKQPR). The helical transmembrane segment at 22–44 (AFYLIFSIELWERFGYYGLQGIM) threads the bilayer. The Periplasmic portion of the chain corresponds to 45-59 (AVYLVKQLGMSEADS). A helical membrane pass occupies residues 60–80 (ITLFSSFSALVYGLVAIGGWL). The Cytoplasmic segment spans residues 81-89 (GDKVLGTKR). The chain crosses the membrane as a helical span at residues 90-110 (VIMLGAIVLAIGYALVAWSGH). Residue D111 is a topological domain, periplasmic. Residues 112–132 (AAIVYMGMATIAVGNGLFKAN) traverse the membrane as a helical segment. Residues 133 to 153 (PSSLLSTCYDKNDPRLDGAFT) lie on the Cytoplasmic side of the membrane. Residues 154–174 (MYYMSINIGSFFSMLATPWLA) traverse the membrane as a helical segment. The Periplasmic segment spans residues 175–178 (ARFG). A helical transmembrane segment spans residues 179–199 (WSVAFALSVVGMVITIINFAF). Residues 200-218 (CQKWVKQYGSKPDFAPVHM) are Cytoplasmic-facing. Residues 219 to 239 (GKLLATIAGVVVLVAIATWLL) traverse the membrane as a helical segment. Topologically, residues 240–246 (HNQGIAR) are periplasmic. Residues 247–267 (MVLGVVALGIVVIFAKETIGL) traverse the membrane as a helical segment. At 268–274 (KGAARRK) the chain is on the cytoplasmic side. A helical membrane pass occupies residues 275–295 (MIVAFLLMVEAIVFFVLYSQM). At 296–320 (PTSLNFFAIRNVEHSILGIAFEPEQ) the chain is on the periplasmic side. Residues 321–341 (YQALNPFWIMIGSPILAAIYN) traverse the membrane as a helical segment. The Cytoplasmic portion of the chain corresponds to 342-352 (KMGDRLPMPHK). The chain crosses the membrane as a helical span at residues 353–373 (FAIGMVLCSGAFLVLPLGAKF). The Periplasmic portion of the chain corresponds to 374-383 (ASDAGIVSVN). A helical transmembrane segment spans residues 384–404 (WLILSYALQSIGELMISGLGL). The Cytoplasmic portion of the chain corresponds to 405 to 414 (AMVAQLVPQR). A helical membrane pass occupies residues 415-435 (LMGFIMGSWFLTTAGAAIIAG). The Periplasmic segment spans residues 436-459 (KIANLMAVPENVTDPLVSLEVYGH). The chain crosses the membrane as a helical span at residues 460–480 (VFLQIGIVTAVIAALMLLTAP). Residues 481–501 (KLNRMTQDDSADLKARETAAA) are Cytoplasmic-facing.

It belongs to the major facilitator superfamily. Proton-dependent oligopeptide transporter (POT/PTR) (TC 2.A.17) family. DtpA subfamily.

The protein resides in the cell inner membrane. Proton-dependent permease that transports di- and tripeptides. This chain is Dipeptide and tripeptide permease A, found in Klebsiella pneumoniae (strain 342).